The primary structure comprises 688 residues: Complement C1s-1 subcomponent (688 aa).

Positions 1 to 15 (MWCLVLFSLLASFSA) are cleaved as a signal peptide. Residues 16–130 (EPTMHGEILS…TGFAAYYTAI (115 aa)) form the CUB 1 domain. The Ca(2+) site is built by Glu-60, Asp-68, Asp-113, Asp-131, Ile-132, and Glu-134. The cysteines at positions 65 and 83 are disulfide-linked. Residues 131–172 (DINECTDFTDVPCSHFCNNFIGGYFCSCPPEYFLHDDMRNCG) enclose the EGF-like; calcium-binding domain. 3 disulfide bridges follow: Cys-135/Cys-147, Cys-143/Cys-156, and Cys-158/Cys-171. Ca(2+) contacts are provided by Asn-149, Phe-150, and Gly-153. Asn-149 is subject to (3R)-3-hydroxyasparagine. The N-linked (GlcNAc...) asparagine glycan is linked to Asn-174. A disulfide bridge connects residues Cys-175 and Cys-202. The CUB 2 domain maps to 175–290 (CSGDVFTALI…KGWKLRYHGD (116 aa)). Ca(2+)-binding residues include Glu-226, Asp-236, Asp-275, Gly-278, and Gln-279. A disulfide bridge connects residues Cys-234 and Cys-251. Sushi domains are found at residues 292 to 356 (ISCA…KCQP) and 357 to 423 (VYCG…RCIP). Cystine bridges form between Cys-294-Cys-341, Cys-321-Cys-354, Cys-359-Cys-403, Cys-386-Cys-421, Cys-425-Cys-549, Cys-595-Cys-618, and Cys-627-Cys-659. The Peptidase S1 domain maps to 438–680 (IFGGQPAKIE…YVDWILKTMQ (243 aa)). Catalysis depends on charge relay system residues His-475 and Asp-529. Ser-631 serves as the catalytic Charge relay system. Asn-641 carries an N-linked (GlcNAc...) asparagine glycan.

It belongs to the peptidase S1 family. As to quaternary structure, core component of the complement C1 complex, a calcium-dependent complex composed of 1 molecule of the C1Q subcomplex, 2 molecules of C1R and 2 molecules of C1S. The C1Q subcomplex is composed 18 subunits: 3 chains of C1QA, C1QB, and C1QC trimerize to form 6 collagen-like triple helices connected to six globular ligand-recognition modules. Post-translationally, cleaved and activated by C1R to generate Complement C1s subcomponent heavy and light chains. In terms of processing, the iron and 2-oxoglutarate dependent 3-hydroxylation of aspartate and asparagine is (R) stereospecific within EGF domains. As to expression, predominantly expressed in liver.

It is found in the secreted. The protein resides in the cell surface. The enzyme catalyses Cleavage of Arg-|-Ala bond in complement component C4 to form C4a and C4b, and Lys(or Arg)-|-Lys bond in complement component C2 to form C2a and C2b: the 'classical' pathway C3 convertase.. With respect to regulation, cleaved and activated by C1R. Immunoglobulin-binding promotes autoactivation of C1R, which results in the cleavage of the Arg-Ile bond in the catalytic domain. Inhibited by C1 inhibitor (SERPING1). Its function is as follows. Component of the complement C1 complex, a multiprotein complex that initiates the classical pathway of the complement system, a cascade of proteins that leads to phagocytosis and breakdown of pathogens and signaling that strengthens the adaptive immune system. C1S is activated following association of the C1 complex with immunoglobulins (IgG or IgM) complexed with antigens to form antigen-antibody complexes on the surface of pathogens. C1S is cleaved and activated by C1R to generate C1s subcomponent heavy and light chains. C1s subcomponent light chain then cleaves and activates C2 and C4, the next components of the classical complement pathway. In terms of biological role, serine protease component of the complement C1 complex, which catalyzes cleavage and activation of C2 and C4, the next components of the classical complement pathway. Also cleaves IGFBP5 and thereby inhibits the trophic effects of IGF1. This Mus musculus (Mouse) protein is Complement C1s-1 subcomponent.